The sequence spans 168 residues: Protein-export protein SecB (168 aa).

This sequence belongs to the SecB family. Homotetramer, a dimer of dimers. One homotetramer interacts with 1 SecA dimer.

It localises to the cytoplasm. In terms of biological role, one of the proteins required for the normal export of preproteins out of the cell cytoplasm. It is a molecular chaperone that binds to a subset of precursor proteins, maintaining them in a translocation-competent state. It also specifically binds to its receptor SecA. This is Protein-export protein SecB from Glaesserella parasuis serovar 5 (strain SH0165) (Haemophilus parasuis).